The following is a 324-amino-acid chain: Holliday junction branch migration complex subunit RuvB (324 aa).

Residues Met1–Tyr168 form a large ATPase domain (RuvB-L) region. Residues Tyr14, Ile15, Gly48, Lys51, Thr52, Thr53, Asp97, Thr146, Tyr168, and Arg205 each coordinate ATP. Thr52 contacts Mg(2+). A small ATPAse domain (RuvB-S) region spans residues Thr169–Gly239. The head domain (RuvB-H) stretch occupies residues Glu242–Pro324. DNA contacts are provided by Arg297 and Arg302.

It belongs to the RuvB family. As to quaternary structure, homohexamer. Forms a complex with RuvA. Electron microscopic images suggest 2 closely interacting RuvA tetramers sandwich the HJ DNA; each tetramer associates with an RuvB hexamer. Forms 2 complexes with Holliday junction (HJ) DNA which probably have 1 and 2 RuvA tetramers per complex (called complex I and complex II). Forms an RuvA(8)-RuvB(12)-Holliday junction (HJ) complex. HJ DNA is sandwiched between 2 RuvA tetramers; dsDNA enters through RuvA and exits via RuvB. An RuvB hexamer assembles on each DNA strand where it exits the tetramer. Each RuvB hexamer is contacted by two RuvA subunits (via domain III) on 2 adjacent RuvB subunits; this complex drives branch migration. In the full resolvosome a probable DNA-RuvA(4)-RuvB(12)-RuvC(2) complex forms which resolves the HJ. The cofactor is Mg(2+).

The protein resides in the cytoplasm. The catalysed reaction is ATP + H2O = ADP + phosphate + H(+). Its activity is regulated as follows. The activity of RuvB is enhanced by E.coli RuvA. Functionally, the RuvA-RuvB-RuvC complex processes Holliday junction (HJ) DNA during genetic recombination and DNA repair, while the RuvA-RuvB complex plays an important role in the rescue of blocked DNA replication forks via replication fork reversal (RFR). RuvA specifically binds to HJ cruciform DNA, conferring on it an open structure. The RuvB hexamer acts as an ATP-dependent pump, pulling dsDNA into and through the RuvAB complex. RuvB forms 2 homohexamers on either side of HJ DNA bound by 1 or 2 RuvA tetramers; 4 subunits per hexamer contact DNA at a time. Coordinated motions by a converter formed by DNA-disengaged RuvB subunits stimulates ATP hydrolysis and nucleotide exchange. Immobilization of the converter enables RuvB to convert the ATP-contained energy into a lever motion, pulling 2 nucleotides of DNA out of the RuvA tetramer per ATP hydrolyzed, thus driving DNA branch migration. The RuvB motors rotate together with the DNA substrate, which together with the progressing nucleotide cycle form the mechanistic basis for DNA recombination by continuous HJ branch migration. Branch migration allows RuvC to scan DNA until it finds its consensus sequence, where it cleaves and resolves cruciform DNA. In terms of biological role, ruvB is a Mg(2+)-dependent, DNA-dependent ATPase with an equal preference for supercoiled and linear dsDNA; all (d)NTPs tested were efficiently hydrolyzed. Promotes Holliday junction (HJ) dissociation at 60 degrees Celsius in the presence of ATP but not ATP-gamma-S or ADP; (d)ATP, (d)CTP and dTTP also power dissociation in the absence of any RuvA. RuvA stimulates the ATPase of RuvB in the presence of dsDNA and HJ branch migration by RuvB. Excess RuvB stimulates some branch migration in vitro even in the presence of mutant RuvA. In Thermus thermophilus (strain ATCC 27634 / DSM 579 / HB8), this protein is Holliday junction branch migration complex subunit RuvB.